Reading from the N-terminus, the 630-residue chain is MKSVMSKIKLFRPVVTLRCSYSSTDQTLLLSEFTRLCYQRDLPRAMKAMDSLQSHGLWADSATYSELIKCCISNRAVHEGNLICRHLYFNGHRPMMFLVNVLINMYVKFNLLNDAHQLFDQMPQRNVISWTTMISAYSKCKIHQKALELLVLMLRDNVRPNVYTYSSVLRSCNGMSDVRMLHCGIIKEGLESDVFVRSALIDVFAKLGEPEDALSVFDEMVTGDAIVWNSIIGGFAQNSRSDVALELFKRMKRAGFIAEQATLTSVLRACTGLALLELGMQAHVHIVKYDQDLILNNALVDMYCKCGSLEDALRVFNQMKERDVITWSTMISGLAQNGYSQEALKLFERMKSSGTKPNYITIVGVLFACSHAGLLEDGWYYFRSMKKLYGIDPVREHYGCMIDLLGKAGKLDDAVKLLNEMECEPDAVTWRTLLGACRVQRNMVLAEYAAKKVIALDPEDAGTYTLLSNIYANSQKWDSVEEIRTRMRDRGIKKEPGCSWIEVNKQIHAFIIGDNSHPQIVEVSKKLNQLIHRLTGIGYVPETNFVLQDLEGEQMEDSLRHHSEKLALAFGLMTLPIEKVIRIRKNLRICGDCHVFCKLASKLEIRSIVIRDPIRYHHFQDGKCSCGDYW.

A mitochondrion-targeting transit peptide spans 1–76; the sequence is MKSVMSKIKL…LIKCCISNRA (76 aa). PPR repeat units follow at residues 60–94, 95–125, 126–160, 161–192, 193–223, 224–258, 259–289, 292–322, 323–357, 358–388, and 394–424; these read DSAT…GHRP, MMFL…MPQR, NVIS…NVRP, NVYT…GLES, DVFV…MVTG, DAIV…GFIA, EQAT…IVKY, DLIL…MKER, DVIT…GTKP, NYIT…MKKL, and VREH…MECE. Residues 429-504 form a type E motif region; sequence TWRTLLGACR…EPGCSWIEVN (76 aa). The tract at residues 505 to 535 is type E(+) motif; that stretch reads KQIHAFIIGDNSHPQIVEVSKKLNQLIHRLT. Positions 536–630 are type DYW motif; the sequence is GIGYVPETNF…DGKCSCGDYW (95 aa).

This sequence belongs to the PPR family. PCMP-H subfamily.

It is found in the mitochondrion. This Arabidopsis thaliana (Mouse-ear cress) protein is Pentatricopeptide repeat-containing protein At2g03880, mitochondrial (PCMP-H44).